A 206-amino-acid polypeptide reads, in one-letter code: Dephospho-CoA kinase (206 aa).

The DPCK domain occupies 4–200 (TVALTGGIGS…ASYLKLASQF (197 aa)). Position 12–17 (12–17 (GSGKST)) interacts with ATP.

The protein belongs to the CoaE family.

It localises to the cytoplasm. The catalysed reaction is 3'-dephospho-CoA + ATP = ADP + CoA + H(+). It participates in cofactor biosynthesis; coenzyme A biosynthesis; CoA from (R)-pantothenate: step 5/5. In terms of biological role, catalyzes the phosphorylation of the 3'-hydroxyl group of dephosphocoenzyme A to form coenzyme A. This is Dephospho-CoA kinase from Salmonella typhimurium (strain LT2 / SGSC1412 / ATCC 700720).